Consider the following 634-residue polypeptide: Lamin tail domain-containing protein 2 (634 aa).

A disordered region spans residues 1-44 (MRWLRPAGRRREQESVSGHLGPPAGAPAAPETPTCLPDTTPHPA). Residues 106–169 (SHSQEKLLQN…QKSCLLQLAR (64 aa)) adopt a coiled-coil conformation. Polar residues predominate over residues 228–237 (FTNMEPSSKQ). Disordered regions lie at residues 228–349 (FTNM…TDPD) and 464–575 (HRIP…PAEA). Positions 276-287 (SSSGGADSDSSS) are enriched in low complexity. Positions 310–321 (SEQALVQAGSYS) are enriched in polar residues. Over residues 322 to 337 (RDSEDLQKTHSPRHGE) the composition is skewed to basic and acidic residues. The LTD domain maps to 350 to 468 (HWSPELLQSP…EVLSEHRIPR (119 aa)). The segment covering 502–513 (PPRPPRPLRKGR) has biased composition (basic residues). The span at 540–550 (HAREGPARPEN) shows a compositional bias: basic and acidic residues.

This is Lamin tail domain-containing protein 2 (LMNTD2) from Homo sapiens (Human).